An 83-amino-acid polypeptide reads, in one-letter code: ATP synthase subunit c (83 aa).

2 helical membrane passes run 10–30 (IAVALLIGMGALGTAIGFGLL) and 52–72 (MFIVAGLLDAVTMIGVGIALF).

The protein belongs to the ATPase C chain family. F-type ATPases have 2 components, F(1) - the catalytic core - and F(0) - the membrane proton channel. F(1) has five subunits: alpha(3), beta(3), gamma(1), delta(1), epsilon(1). F(0) has three main subunits: a(1), b(2) and c(10-14). The alpha and beta chains form an alternating ring which encloses part of the gamma chain. F(1) is attached to F(0) by a central stalk formed by the gamma and epsilon chains, while a peripheral stalk is formed by the delta and b chains.

It is found in the cell inner membrane. Functionally, f(1)F(0) ATP synthase produces ATP from ADP in the presence of a proton or sodium gradient. F-type ATPases consist of two structural domains, F(1) containing the extramembraneous catalytic core and F(0) containing the membrane proton channel, linked together by a central stalk and a peripheral stalk. During catalysis, ATP synthesis in the catalytic domain of F(1) is coupled via a rotary mechanism of the central stalk subunits to proton translocation. In terms of biological role, key component of the F(0) channel; it plays a direct role in translocation across the membrane. A homomeric c-ring of between 10-14 subunits forms the central stalk rotor element with the F(1) delta and epsilon subunits. The chain is ATP synthase subunit c from Shewanella loihica (strain ATCC BAA-1088 / PV-4).